The sequence spans 372 residues: Flap endonuclease 1 (372 aa).

Residues 1–105 (MGVKGLNQLI…GELEKRLLRR (105 aa)) are N-domain. Position 34 (Asp-34) interacts with Mg(2+). Residues Arg-47 and Arg-71 each contribute to the DNA site. The Mg(2+) site is built by Asp-87, Glu-159, Glu-161, Asp-180, and Asp-182. Positions 123–254 (EVLKFEKRLV…ATAFKLIKEH (132 aa)) are I-domain. DNA is bound at residue Glu-159. Gly-232 and Asp-234 together coordinate DNA. Asp-234 contacts Mg(2+). Residues 339 to 347 (VQGRLDGFF) form an interaction with PCNA region. The segment covering 353 to 366 (DDKKRKADPKESKA) has biased composition (basic and acidic residues). Positions 353 to 372 (DDKKRKADPKESKASKKKKK) are disordered.

This sequence belongs to the XPG/RAD2 endonuclease family. FEN1 subfamily. In terms of assembly, interacts with PCNA. Three molecules of RAD27 bind to one PCNA trimer with each molecule binding to one PCNA monomer. PCNA stimulates the nuclease activity without altering cleavage specificity. Requires Mg(2+) as cofactor. Phosphorylated. Phosphorylation upon DNA damage induces relocalization to the nuclear plasma.

It localises to the nucleus. Its subcellular location is the nucleolus. The protein resides in the nucleoplasm. The protein localises to the mitochondrion. Structure-specific nuclease with 5'-flap endonuclease and 5'-3' exonuclease activities involved in DNA replication and repair. During DNA replication, cleaves the 5'-overhanging flap structure that is generated by displacement synthesis when DNA polymerase encounters the 5'-end of a downstream Okazaki fragment. It enters the flap from the 5'-end and then tracks to cleave the flap base, leaving a nick for ligation. Also involved in the long patch base excision repair (LP-BER) pathway, by cleaving within the apurinic/apyrimidinic (AP) site-terminated flap. Acts as a genome stabilization factor that prevents flaps from equilibrating into structures that lead to duplications and deletions. Also possesses 5'-3' exonuclease activity on nicked or gapped double-stranded DNA, and exhibits RNase H activity. Also involved in replication and repair of rDNA and in repairing mitochondrial DNA. In Candida albicans (strain WO-1) (Yeast), this protein is Flap endonuclease 1.